The chain runs to 165 residues: Transcription antitermination protein NusB (165 aa).

The interval 1–20 (MSDVENGGEPRQPSVKPANQ) is disordered.

It belongs to the NusB family.

Its function is as follows. Involved in transcription antitermination. Required for transcription of ribosomal RNA (rRNA) genes. Binds specifically to the boxA antiterminator sequence of the ribosomal RNA (rrn) operons. This chain is Transcription antitermination protein NusB, found in Agrobacterium fabrum (strain C58 / ATCC 33970) (Agrobacterium tumefaciens (strain C58)).